Reading from the N-terminus, the 459-residue chain is FAD-dependent monooxygenase nanF (459 aa).

Glu49, Gly62, and Arg121 together coordinate FAD. Residues Arg200 and Tyr230 contribute to the active site. 2 residues coordinate FAD: Asp327 and Gly340.

It belongs to the paxM FAD-dependent monooxygenase family. The cofactor is FAD.

It functions in the pathway secondary metabolite biosynthesis. Functionally, FAD-dependent monooxygenase; part of the gene cluster that mediates the biosynthesis of the benzazepine alkaloid nanangelenin A which contains an unprecedented 3,4-dihydro-1-benzazepine-2,5-dione-N-prenyl-N-acetoxy-anthranilamide scaffold. The first step of nanangelenin biosynthesis is catalyzed by the indoleamine 2,3-dioxygenase nanC which produces N-formyl-kynurenine through the catabolism of tryptophan. The two-module NRPS nanA then utilizes anthranilate (Ant) and L-kynurenine (L-Kyn) to assemble the dipeptide product nanangelenin B. The first adenylation domain of nanA (A1) loads anthranilate onto the T1 domain, while A2 loads kynurenine, generated through spontaneous nonenzymatic deformylation of the nanC-supplied N-formyl-kynurenine. The peptide bond formation between the tethered amino acids is catalyzed by the first condensation domain (C1) between anthranilate's carbonyl carbon and kynurenine's aliphatic primary amine. The second C domain (C2) catalyzes the final cyclization event between the aromatic amine of kynurenine and the tethered carbonyl carbon, yielding nanangelenin B. The terminal T3 domain enhances the catalytic efficiency of C2, suggesting the T2-tethered Ant-L-Kyn is transferred to T3 prior to cyclization by C2. Once released from nanA, nanangelenin B is then prenylated by the prenyltransferase nanD to form nanangelenin C. Nanangelenin C is then N-hydroxylated by the FAD-dependent monooxygenase nanF and further acetylated by the acetyltransferase nanB to yield nanangelenin F. Finally, the N-methyltransferase nanE methylates the amide nitrogen of 1-benzazepine to convert nanangelenin F into nanangelenin A. NanE is also able to methylate most of the intermediates of the pathway such as nanangelenin B and nanangelenin C to produce nanangelenin D and nanangelenin E, respectively. This is FAD-dependent monooxygenase nanF from Aspergillus nanangensis.